The primary structure comprises 513 residues: GMP synthase [glutamine-hydrolyzing] (513 aa).

A Glutamine amidotransferase type-1 domain is found at 8 to 198 (MILVLDFGSQ…VFGVCECEGE (191 aa)). The active-site Nucleophile is the Cys85. Active-site residues include His172 and Glu174. A GMPS ATP-PPase domain is found at 199–388 (WSMENFIEIE…LGIPDEIVWR (190 aa)). An ATP-binding site is contributed by 227 to 233 (GGVDSSV).

Homodimer.

It catalyses the reaction XMP + L-glutamine + ATP + H2O = GMP + L-glutamate + AMP + diphosphate + 2 H(+). Its pathway is purine metabolism; GMP biosynthesis; GMP from XMP (L-Gln route): step 1/1. Functionally, catalyzes the synthesis of GMP from XMP. The protein is GMP synthase [glutamine-hydrolyzing] (guaA) of Bacillus subtilis (strain 168).